A 241-amino-acid polypeptide reads, in one-letter code: Phosphoribosylaminoimidazole-succinocarboxamide synthase (241 aa).

This sequence belongs to the SAICAR synthetase family.

The enzyme catalyses 5-amino-1-(5-phospho-D-ribosyl)imidazole-4-carboxylate + L-aspartate + ATP = (2S)-2-[5-amino-1-(5-phospho-beta-D-ribosyl)imidazole-4-carboxamido]succinate + ADP + phosphate + 2 H(+). It functions in the pathway purine metabolism; IMP biosynthesis via de novo pathway; 5-amino-1-(5-phospho-D-ribosyl)imidazole-4-carboxamide from 5-amino-1-(5-phospho-D-ribosyl)imidazole-4-carboxylate: step 1/2. The chain is Phosphoribosylaminoimidazole-succinocarboxamide synthase from Methanoculleus marisnigri (strain ATCC 35101 / DSM 1498 / JR1).